We begin with the raw amino-acid sequence, 118 residues long: MYFICLNDLRFPKNKTELYFPVKKKHEWANSATGKKRRWRKKRRKEAYFSYMGKILKQIHPDFSGRSWVLYALGALNAWQLEWVSLEAFRLSFYNHRRAITGREILGAVKQRSSQKSF.

This sequence belongs to the histone H2B family. The nucleosome is a histone octamer containing two molecules each of H2A, H2B, H3 and H4 assembled in one H3-H4 heterotetramer and two H2A-H2B heterodimers. The octamer wraps approximately 147 bp of DNA. As to expression, expressed in germline. Predominantly expressed in oocytes.

The protein localises to the nucleus. It localises to the chromosome. In terms of biological role, core component of nucleosome. Nucleosomes wrap and compact DNA into chromatin, limiting DNA accessibility to the cellular machineries which require DNA as a template. Histones thereby play a central role in transcription regulation, DNA repair, DNA replication and chromosomal stability. DNA accessibility is regulated via a complex set of post-translational modifications of histones, also called histone code, and nucleosome remodeling. The chain is Histone H2B.N from Homo sapiens (Human).